The chain runs to 355 residues: 3-isopropylmalate dehydrogenase (355 aa).

Arginine 90, arginine 100, arginine 128, and aspartate 222 together coordinate substrate. Positions 222, 246, and 250 each coordinate Mg(2+). An NAD(+)-binding site is contributed by 280–292; the sequence is GSAPDIAGKGIAN.

Belongs to the isocitrate and isopropylmalate dehydrogenases family. LeuB type 1 subfamily. As to quaternary structure, homodimer. It depends on Mg(2+) as a cofactor. Requires Mn(2+) as cofactor.

Its subcellular location is the cytoplasm. It catalyses the reaction (2R,3S)-3-isopropylmalate + NAD(+) = 4-methyl-2-oxopentanoate + CO2 + NADH. Its pathway is amino-acid biosynthesis; L-leucine biosynthesis; L-leucine from 3-methyl-2-oxobutanoate: step 3/4. In terms of biological role, catalyzes the oxidation of 3-carboxy-2-hydroxy-4-methylpentanoate (3-isopropylmalate) to 3-carboxy-4-methyl-2-oxopentanoate. The product decarboxylates to 4-methyl-2 oxopentanoate. The sequence is that of 3-isopropylmalate dehydrogenase from Burkholderia mallei (strain ATCC 23344).